An 89-amino-acid chain; its full sequence is Class I hydrophobin D (89 aa).

The signal sequence occupies residues 1–16 (MKFSLATIALAAAVVA). 4 cysteine pairs are disulfide-bonded: Cys-28/Cys-68, Cys-39/Cys-60, Cys-40/Cys-52, and Cys-69/Cys-85. A glycan (N-linked (GlcNAc...) asparagine) is linked at Asn-36.

The protein belongs to the fungal hydrophobin family.

The protein resides in the secreted. The protein localises to the cell wall. Its subcellular location is the vacuole. It localises to the cytoplasmic vesicle. Functionally, aerial growth, conidiation, and dispersal of filamentous fungi in the environment rely upon a capability of their secreting small amphipathic proteins called hydrophobins (HPBs) with low sequence identity. Class I can self-assemble into an outermost layer of rodlet bundles on aerial cell surfaces, conferring cellular hydrophobicity that supports fungal growth, development and dispersal; whereas Class II form highly ordered films at water-air interfaces through intermolecular interactions but contribute nothing to the rodlet structure. Hyd1D contributes to certain cell wall-related features, such as hydrophobicity but is not involved in cell wall-related events during fungal proliferation in host hemocoel. Does not contribute to conidial hydrophobicity. Involved in insect hemocoel colonization independent of cell hydrophobicity. The chain is Class I hydrophobin D from Beauveria bassiana (strain ARSEF 2860) (White muscardine disease fungus).